Here is a 319-residue protein sequence, read N- to C-terminus: Ribonuclease Z (319 aa).

Zn(2+) contacts are provided by histidine 62, histidine 64, aspartate 66, histidine 67, histidine 139, aspartate 209, and histidine 268. Catalysis depends on aspartate 66, which acts as the Proton acceptor.

This sequence belongs to the RNase Z family. In terms of assembly, homodimer. It depends on Zn(2+) as a cofactor.

It catalyses the reaction Endonucleolytic cleavage of RNA, removing extra 3' nucleotides from tRNA precursor, generating 3' termini of tRNAs. A 3'-hydroxy group is left at the tRNA terminus and a 5'-phosphoryl group is left at the trailer molecule.. Functionally, zinc phosphodiesterase, which displays some tRNA 3'-processing endonuclease activity. Probably involved in tRNA maturation, by removing a 3'-trailer from precursor tRNA. The sequence is that of Ribonuclease Z from Pseudomonas putida (strain ATCC 700007 / DSM 6899 / JCM 31910 / BCRC 17059 / LMG 24140 / F1).